Here is a 216-residue protein sequence, read N- to C-terminus: Probable nicotinate-nucleotide adenylyltransferase (216 aa).

The protein belongs to the NadD family.

The catalysed reaction is nicotinate beta-D-ribonucleotide + ATP + H(+) = deamido-NAD(+) + diphosphate. Its pathway is cofactor biosynthesis; NAD(+) biosynthesis; deamido-NAD(+) from nicotinate D-ribonucleotide: step 1/1. Its function is as follows. Catalyzes the reversible adenylation of nicotinate mononucleotide (NaMN) to nicotinic acid adenine dinucleotide (NaAD). This chain is Probable nicotinate-nucleotide adenylyltransferase, found in Geotalea daltonii (strain DSM 22248 / JCM 15807 / FRC-32) (Geobacter daltonii).